The primary structure comprises 76 residues: NADH dehydrogenase [ubiquinone] 1 subunit C1, mitochondrial (76 aa).

The N-terminal 27 residues, 1 to 27 (MAPSALLRPLSRLLAPARLPSGPSVRS), are a transit peptide targeting the mitochondrion. The chain crosses the membrane as a helical span at residues 41–59 (WLKVGFTLGTTVFLWIYLI).

It belongs to the complex I NDUFC1 subunit family. In terms of assembly, complex I is composed of 45 different subunits.

It localises to the mitochondrion inner membrane. Its function is as follows. Accessory subunit of the mitochondrial membrane respiratory chain NADH dehydrogenase (Complex I), that is believed not to be involved in catalysis. Complex I functions in the transfer of electrons from NADH to the respiratory chain. The immediate electron acceptor for the enzyme is believed to be ubiquinone. The chain is NADH dehydrogenase [ubiquinone] 1 subunit C1, mitochondrial (NDUFC1) from Homo sapiens (Human).